Reading from the N-terminus, the 489-residue chain is UDP-glycosyltransferase 85A1 (489 aa).

UDP-alpha-D-glucose contacts are provided by residues serine 307, 364-366 (CPQ), 381-389 (HCGWNSILE), and 403-406 (FADQ).

The protein belongs to the UDP-glycosyltransferase family. In terms of tissue distribution, expressed in root tips, lateral root initials, root apex, shoots, leaf periphery, leaf primordia and flowers.

Involved in the O-glucosylation of trans-zeatin and dihydrozeatin. Also active in vitro on cis-zeatin. Not active on N-glucosylated substrates. The chain is UDP-glycosyltransferase 85A1 (UGT85A1) from Arabidopsis thaliana (Mouse-ear cress).